The sequence spans 612 residues: Pentatricopeptide repeat-containing protein At4g14050, mitochondrial (612 aa).

The N-terminal 24 residues, 1–24 (MLIPHYLHQLQLCARNRTLTTAKA), are a transit peptide targeting the mitochondrion. 11 PPR repeats span residues 37–71 (CCPL…DHIA), 72–103 (WASV…GLRP), 104–138 (DDFV…EYAN), 139–169 (DEVV…IRVK), 170–204 (NTIS…NLYS), 205–235 (WTAL…RVDI), 237–271 (DPLV…GFDS), 272–302 (CVFI…MRHR), 303–337 (DVVS…GVKP), 338–373 (NEVT…GIRP), and 374–408 (SLQH…PDEP). Residues 409-485 (TWAALLSACK…DPGHSSVEVR (77 aa)) form a type E motif region. Residues 486–516 (KETEVFYAGETSHPLKEDIFRLLKKLEEEMR) are type E(+) motif. The tract at residues 518–612 (RNGYVPDTSW…GGKCSCNDFW (95 aa)) is type DYW motif.

Belongs to the PPR family. PCMP-H subfamily. As to quaternary structure, interacts with MORF8/RIP1 and MORF1/RIP8.

Its subcellular location is the mitochondrion. Functionally, involved in C-to-U editing of mitochondrial RNA. Required specifically for editing the mitochondrial NAD4, MT-CYB/COB and RPL16 transcripts. The protein is Pentatricopeptide repeat-containing protein At4g14050, mitochondrial (PCMP-H13) of Arabidopsis thaliana (Mouse-ear cress).